Reading from the N-terminus, the 134-residue chain is Putative F-box protein R638 (134 aa).

In terms of domain architecture, F-box spans 5 to 52 (NIMNLLNEDCILHILSFLADKDKIQLSLSCKSNLKFLHKTIYDDIYFY).

In Acanthamoeba polyphaga mimivirus (APMV), this protein is Putative F-box protein R638.